A 654-amino-acid polypeptide reads, in one-letter code: MAATTNAGRSMASWRRLPTLIAAFTLSWASSFVAAAGSADYFVHDLPGAPDGPLVKMHAGHIEVNPENNGNLFFWHFQNKHIANKQRTVIWLNGGPGCSSEDGALMEIGPYRLKDENTLVYNDGAWNEFANVLFVDNPVGTGFSYVDTNAYIHELTEMASNFITFLERWFALFPEYEHDDLYIAGESYAGQYIPYIAQAIIERNKNAGPVNHKWNLAGLLIGNGWISPKEQYEAYLQFAYEKGIVKKGTDLATRLENPTALCQLKITESPDKIDYTECEEILQDMLQQTAGGVGASGKPQCYNMYDVRLKDDYPSCGMAWPPDLKSVTPYLRKKEVIKALNINENKSTGWTECNGQVGLNFHPKTKPSITLLPDILSSGVPILLFSGAEDLICNHLGTEALISNMEWNGGKGFELTPGTWATRRDWTFEGEPAGFWQQARNLTYVLFYNSSHMAPFDYPRRTRDMLDRFMGVDISSIGGQPTDSRLDGEKLPETTVGGAAGNSTSNQAAEKAKLEMAKWEAYRKSGELVLVIVIVAAAIWGWFVWKDRRKTAGQGYMGVATGERHSISTNPSGSRQGNVSGRTRGQGLEGFRNKRSGRRDVEAQDFDESELDDLHLSKPEDPHADSRYSIGDASDDEDGQKPEKSSSSGQAGRS.

The first 29 residues, 1–29 (MAATTNAGRSMASWRRLPTLIAAFTLSWA), serve as a signal peptide directing secretion. Topologically, residues 30 to 524 (SSFVAAAGSA…EMAKWEAYRK (495 aa)) are lumenal. S187 is an active-site residue. N-linked (GlcNAc...) asparagine glycosylation is present at N345. D390 is a catalytic residue. N441 and N449 each carry an N-linked (GlcNAc...) asparagine glycan. H452 is a catalytic residue. Residue N502 is glycosylated (N-linked (GlcNAc...) asparagine). The helical transmembrane segment at 525–545 (SGELVLVIVIVAAAIWGWFVW) threads the bilayer. Topologically, residues 546-654 (KDRRKTAGQG…SSSSGQAGRS (109 aa)) are cytoplasmic. The segment at 563-654 (ERHSISTNPS…SSSSGQAGRS (92 aa)) is disordered. Polar residues predominate over residues 567–583 (ISTNPSGSRQGNVSGRT). Residues 612 to 626 (DDLHLSKPEDPHADS) show a composition bias toward basic and acidic residues. Positions 645–654 (SSSSGQAGRS) are enriched in polar residues.

This sequence belongs to the peptidase S10 family.

It is found in the golgi apparatus. The protein resides in the trans-Golgi network membrane. It catalyses the reaction Preferential release of a C-terminal arginine or lysine residue.. Protease with a carboxypeptidase B-like function involved in the C-terminal processing of the lysine and arginine residues from protein precursors. Promotes cell fusion and is involved in the programmed cell death. The sequence is that of Pheromone-processing carboxypeptidase KEX1 (KEX1) from Sordaria macrospora (strain ATCC MYA-333 / DSM 997 / K(L3346) / K-hell).